The sequence spans 663 residues: DNA ligase 1 (663 aa).

NAD(+) is bound by residues 30 to 34 and 78 to 79; these read DAEYD and SL. K105 acts as the N6-AMP-lysine intermediate in catalysis. 3 residues coordinate NAD(+): R126, E161, and K294. Zn(2+) is bound by residues C389, C392, C407, and C412. The 90-residue stretch at 574-663 folds into the BRCT domain; it reads AAGAPLAGKT…WAQLIEAKLV (90 aa).

It belongs to the NAD-dependent DNA ligase family. LigA subfamily. Mg(2+) is required as a cofactor. The cofactor is Mn(2+).

It catalyses the reaction NAD(+) + (deoxyribonucleotide)n-3'-hydroxyl + 5'-phospho-(deoxyribonucleotide)m = (deoxyribonucleotide)n+m + AMP + beta-nicotinamide D-nucleotide.. In terms of biological role, DNA ligase that catalyzes the formation of phosphodiester linkages between 5'-phosphoryl and 3'-hydroxyl groups in double-stranded DNA using NAD as a coenzyme and as the energy source for the reaction. It is essential for DNA replication and repair of damaged DNA. The protein is DNA ligase 1 of Nocardia farcinica (strain IFM 10152).